Here is a 555-residue protein sequence, read N- to C-terminus: Neurofilament light polypeptide (555 aa).

Ser2 carries the N-acetylserine modification. The tract at residues 2–93 (SSFSYEPYYS…KSIRTQEKAQ (92 aa)) is head. Position 23 is an asymmetric dimethylarginine; alternate (Arg23). Arg23 is modified (omega-N-methylarginine; alternate). Position 30 is an omega-N-methylarginine (Arg30). Residue Tyr43 is modified to Phosphotyrosine. Residues Ser56, Ser67, and Ser103 each carry the phosphoserine modification. In terms of domain architecture, IF rod spans 90-401 (EKAQLQDLND…KLLEGEETRL (312 aa)). Residues 94 to 125 (LQDLNDRFASFIERVHELEQQNKVLEAELLVL) are coil 1A. The interval 126–138 (RQKHSEPSRFRAL) is linker 1. The coil 1B stretch occupies residues 139-234 (YEQEIRDLRL…KVHEEEIAEL (96 aa)). A linker 12 region spans residues 235-253 (QAQIQYAQISVEMDVSSKP). The coil 2A stretch occupies residues 254–272 (DLSAALKDIRAQYEKLAAK). A linker 2 region spans residues 273–281 (NMQNAEEWF). The segment at 282–397 (KSRFTVLTES…AAYRKLLEGE (116 aa)) is coil 2B. Residues 398-444 (ETRLSFTSVGSLTTGYTQSSQVFGRSAYGGLQTSSYLMSARSFPSYY) form a tail, subdomain A region. The tail stretch occupies residues 398–555 (ETRLSFTSVG…GEEQATKKKD (158 aa)). The tail, subdomain B (acidic) stretch occupies residues 445–555 (TSHVQEEQIE…GEEQATKKKD (111 aa)). A disordered region spans residues 463 to 555 (KAEEAKDEPP…GEEQATKKKD (93 aa)). Acidic residues predominate over residues 472 to 540 (PSEGEAEEEE…ETKEAEEEEK (69 aa)). Phosphoserine is present on Ser473. Thr532 carries the phosphothreonine modification. Residues 541-555 (KDEGAGEEQATKKKD) show a composition bias toward basic and acidic residues.

It belongs to the intermediate filament family. As to quaternary structure, forms homodimers (in vitro). Forms heterodimers with NEFH or NEFM; which can further hetero-oligomerize (in vitro). Forms heterodimers with INA (in vitro). Interacts with ARHGEF28. Interacts with TRIM2. Post-translationally, O-glycosylated. In terms of processing, phosphorylated in the head and rod regions by the PKC kinase PKN1, leading to the inhibition of polymerization. Ubiquitinated in the presence of TRIM2 and UBE2D1.

The protein resides in the cell projection. It is found in the axon. The protein localises to the cytoplasm. Its subcellular location is the cytoskeleton. In terms of biological role, neurofilaments usually contain three intermediate filament proteins: NEFL, NEFM, and NEFH which are involved in the maintenance of neuronal caliber. May additionally cooperate with the neuronal intermediate filament proteins PRPH and INA to form neuronal filamentous networks. This is Neurofilament light polypeptide (NEFL) from Bos taurus (Bovine).